The sequence spans 547 residues: Ribosome protection protein VmlR (547 aa).

One can recognise an ABC transporter 1 domain in the interval 5 to 200 (VTLTNVSYEV…FREKKRLTQQ (196 aa)). 37-44 (GKNGAGKS) is a binding site for ATP. Residues 183 to 289 (GNYSGYMKFR…SIDTTHKTGK (107 aa)) form an antibiotic resistance domain (ARD) region. Coiled-coil stretches lie at residues 193-222 (EKKRLTQQREYEKQQKMVERIEAQMNGLAS) and 245-269 (AKRTDAQIKSKQKRLEKELEKAKAE). Residues 292 to 504 (LEVQNVTKAF…REELRLKLET (213 aa)) form the ABC transporter 2 domain. 324-331 (GPNGSGKT) contributes to the ATP binding site. A C-terminal extension (CTE) region spans residues 483–547 (KQLNDVPSER…KELDHQDKKD (65 aa)). Positions 488 to 543 (VPSERNEREELRLKLETERQEVLGKLSFMTPNDKGYKELDQAFNELTKRIKELDHQ) form a coiled coil.

This sequence belongs to the ABC transporter superfamily. ABCF family. ARE2 subfamily. In terms of assembly, binds within the E-site of the 70S ribosome, where it contacts ribosomal proteins L1, L5, L33-1, S7, S11, the 16 and 23S rRNAs and the acceptor arm of the P-site tRNA.

It is found in the cytoplasm. Recognizes and binds in the vacant E-site of ribosomes stalled by some peptidyltransferase center (PTC)-targeting antibiotics. Makes contact with the PTC and both ribosomal subunits. Induces conformational changes in the P-site, which allows it to dislodge the antibiotic from its PTC binding site. Binds to ribosomes either directly following translation initation or subsequent to E tRNA release during elongation. Involved in resistance to a narrow spectrum of antibiotics (the streptogramin A antibiotic virginiamycin M, the lincosamide antibiotic lincomycin and the pleuromutilin antibiotic tiamulin). The protein is Ribosome protection protein VmlR of Bacillus subtilis (strain 168).